The sequence spans 403 residues: Phosphoglycerate kinase (403 aa).

Substrate is bound by residues 22-24, R37, 60-63, R119, and R156; these read DLN and HLGR. ATP is bound by residues K206, G302, E333, and 359–362; that span reads GGDS.

The protein belongs to the phosphoglycerate kinase family. Monomer.

It is found in the cytoplasm. The enzyme catalyses (2R)-3-phosphoglycerate + ATP = (2R)-3-phospho-glyceroyl phosphate + ADP. The protein operates within carbohydrate degradation; glycolysis; pyruvate from D-glyceraldehyde 3-phosphate: step 2/5. This is Phosphoglycerate kinase from Leifsonia xyli subsp. xyli (strain CTCB07).